Consider the following 231-residue polypeptide: Septum site-determining protein MinC (231 aa).

Belongs to the MinC family. Interacts with MinD and FtsZ.

Its function is as follows. Cell division inhibitor that blocks the formation of polar Z ring septums. Rapidly oscillates between the poles of the cell to destabilize FtsZ filaments that have formed before they mature into polar Z rings. Prevents FtsZ polymerization. The protein is Septum site-determining protein MinC of Shigella flexneri.